We begin with the raw amino-acid sequence, 910 residues long: Auxilin (910 aa).

A run of 3 repeats spans residues 33 to 36, 37 to 40, and 41 to 44. Positions 33 to 44 are 3 X 4 AA approximate tandem repeats; it reads NLKDNLKDTLKD. Residues 52–219 form the Phosphatase tensin-type domain; that stretch reads SVTSYTKGDL…GYMCDLLADK (168 aa). The residue at position 109 (S109) is a Phosphoserine. C161 serves as the catalytic Phosphocysteine intermediate. Positions 225–363 constitute a C2 tensin-type domain; sequence FKPLTIKSIT…FQVTLDVELQ (139 aa). The short motif at 406–414 is the SH3-binding element; that stretch reads PIDIPPDNP. Residues 448–772 are disordered; sequence QESEQSDDEL…RGKAAANLEG (325 aa). A phosphoserine mark is found at S450, S453, S560, and S567. Residues 547–569 are compositionally biased toward low complexity; the sequence is PSGPTSTQSTPRRSATSTSASPT. Over residues 596 to 626 the composition is skewed to polar residues; that stretch reads FLNTASASSDPFLQPTRSPSPTVHASSTPAV. Residues 651–666 are compositionally biased toward low complexity; that stretch reads SAATSPTGSSHGTPTH. Residues 715-725 are compositionally biased toward gly residues; it reads MGGGWQQGGGY. Residues 732–758 show a composition bias toward polar residues; that stretch reads SKPQSSMPHSSPQNRPNYNVSFSSMPG. One can recognise a J domain in the interval 846-910; sequence TKWKPVGMAD…FENQGQKPLY (65 aa).

In terms of assembly, forms a complex composed of HSPA8, CLTC and DNAJC6. Interacts with HSPA8/HSC70 in an ATP-dependent manner; this interaction stimulates the HSPA8's ATPase activity. Interacts with CLTC; this interaction produces a local change in heavy-chain contacts, creating a detectable global distortion of the clathrin coat. Interacts with AP2A2. Interacts with DNM1(GTP-bound form); this interaction allows clathrin-coated vesicle (CCV) formation at the plasma membrane. Post-translationally, the N-terminus is blocked. Phosphorylation at Ser-567 modulates its ability to bind CLTC and therefore the synaptic vesicle endocytosis (SVE). As to expression, brain.

Its subcellular location is the cytoplasmic vesicle. It localises to the clathrin-coated vesicle. May act as a protein phosphatase and/or a lipid phosphatase. Co-chaperone that recruits HSPA8/HSC70 to clathrin-coated vesicles (CCVs) and promotes the ATP-dependent dissociation of clathrin from CCVs and participates in clathrin-mediated endocytosis of synaptic vesicles and their recycling and also in intracellular trafficking. Firstly, binds tightly to the clathrin cages, at a ratio of one DNAJC6 per clathrin triskelion. The HSPA8:ATP complex then binds to the clathrin-auxilin cage, initially at a ratio of one HSPA8 per triskelion leading to ATP hydrolysis stimulation and causing a conformational change in the HSPA8. This cycle is repeated three times to drive to a complex containing the clathrin-auxilin cage associated to three HSPA8:ADP complex. The ATP hydrolysis of the third HSPA8:ATP complex leads to a concerted dismantling of the cage into component triskelia. Then, dissociates from the released triskelia and be recycled to initiate another cycle of HSPA8's recruitment. Also acts during the early steps of clathrin-coated vesicle (CCV) formation through its interaction with the GTP bound form of DNM1. This is Auxilin from Bos taurus (Bovine).